The primary structure comprises 156 residues: ATP synthase subunit b (156 aa).

A helical transmembrane segment spans residues 11-31 (AIAFILFVWFCMKYVWPPLMA).

The protein belongs to the ATPase B chain family. In terms of assembly, F-type ATPases have 2 components, F(1) - the catalytic core - and F(0) - the membrane proton channel. F(1) has five subunits: alpha(3), beta(3), gamma(1), delta(1), epsilon(1). F(0) has three main subunits: a(1), b(2) and c(10-14). The alpha and beta chains form an alternating ring which encloses part of the gamma chain. F(1) is attached to F(0) by a central stalk formed by the gamma and epsilon chains, while a peripheral stalk is formed by the delta and b chains.

It localises to the cell inner membrane. Its function is as follows. F(1)F(0) ATP synthase produces ATP from ADP in the presence of a proton or sodium gradient. F-type ATPases consist of two structural domains, F(1) containing the extramembraneous catalytic core and F(0) containing the membrane proton channel, linked together by a central stalk and a peripheral stalk. During catalysis, ATP synthesis in the catalytic domain of F(1) is coupled via a rotary mechanism of the central stalk subunits to proton translocation. Functionally, component of the F(0) channel, it forms part of the peripheral stalk, linking F(1) to F(0). This chain is ATP synthase subunit b, found in Salmonella gallinarum (strain 287/91 / NCTC 13346).